The sequence spans 288 residues: Serine/threonine-protein phosphatase PGAM5, mitochondrial (288 aa).

At 1–6 (MAFRQA) the chain is on the mitochondrial matrix side. Residues 7–29 (LQLAACGLAGGSAAVLFSAVAVG) form a helical membrane-spanning segment. Residues 30 to 288 (KPRGGGDADT…FMPPDKITRS (259 aa)) lie on the Mitochondrial intermembrane side of the membrane. Residues 76-81 (NVESGE) are interaction with KEAP1. Residues Ser79 and Ser86 each carry the phosphoserine modification. N6-acetyllysine occurs at positions 115, 143, and 190.

This sequence belongs to the phosphoglycerate mutase family. BPG-dependent PGAM subfamily. Dimer. Forms a ternary complex with NFE2L2 and KEAP1. Interacts with BCL2L1 and MAP3K5. Upon TNF-induced necrosis, forms in complex with RIPK1, RIPK3 and MLKL; the formation of this complex leads to PGAM5 phosphorylation. Isoform 2, but not isoform 1, interacts with DNM1L; this interaction leads to DNM1L dephosphorylation and activation and eventually to mitochondria fragmentation. In terms of processing, phosphorylated by the RIPK1/RIPK3 complex under necrotic conditions. This phosphorylation increases PGAM5 phosphatase activity. Post-translationally, proteolytically cleaved by PARL in response to loss of mitochondrial membrane potential.

The protein resides in the mitochondrion outer membrane. It localises to the mitochondrion inner membrane. The catalysed reaction is O-phospho-L-seryl-[protein] + H2O = L-seryl-[protein] + phosphate. It catalyses the reaction O-phospho-L-threonyl-[protein] + H2O = L-threonyl-[protein] + phosphate. Functionally, mitochondrial serine/threonine phosphatase that dephosphorylates various substrates and thus plays a role in different biological processes including cellular senescence or mitophagy. Modulates cellular senescence by regulating mitochondrial dynamics. Mechanistically, participates in mitochondrial fission through dephosphorylating DNM1L/DRP1. Additionally, dephosphorylates MFN2 in a stress-sensitive manner and consequently protects it from ubiquitination and degradation to promote mitochondrial network formation. Regulates mitophagy independent of PARKIN by interacting with and dephosphorylating FUNDC1, which interacts with LC3. Regulates anti-oxidative response by forming a tertiary complex with KEAP1 and NRF2. Regulates necroptosis by acting as a RIPK3 target and recruiting the RIPK1-RIPK3-MLKL necrosis 'attack' complex to mitochondria. This Mus musculus (Mouse) protein is Serine/threonine-protein phosphatase PGAM5, mitochondrial (Pgam5).